Consider the following 72-residue polypeptide: Translation initiation factor IF-1 (72 aa).

Residues 1–72 (MSKEDVIEVE…TRGRITWRKK (72 aa)) enclose the S1-like domain.

The protein belongs to the IF-1 family. In terms of assembly, component of the 30S ribosomal translation pre-initiation complex which assembles on the 30S ribosome in the order IF-2 and IF-3, IF-1 and N-formylmethionyl-tRNA(fMet); mRNA recruitment can occur at any time during PIC assembly.

Its subcellular location is the cytoplasm. Its function is as follows. One of the essential components for the initiation of protein synthesis. Stabilizes the binding of IF-2 and IF-3 on the 30S subunit to which N-formylmethionyl-tRNA(fMet) subsequently binds. Helps modulate mRNA selection, yielding the 30S pre-initiation complex (PIC). Upon addition of the 50S ribosomal subunit IF-1, IF-2 and IF-3 are released leaving the mature 70S translation initiation complex. This Alkaliphilus metalliredigens (strain QYMF) protein is Translation initiation factor IF-1.